The following is a 339-amino-acid chain: Dihydroorotate dehydrogenase (quinone) (339 aa).

FMN-binding positions include 62 to 66 (AGMDK) and T86. A substrate-binding site is contributed by K66. 111 to 115 (NRMGF) provides a ligand contact to substrate. The FMN site is built by N139 and N172. N172 lines the substrate pocket. S175 functions as the Nucleophile in the catalytic mechanism. A substrate-binding site is contributed by N177. 2 residues coordinate FMN: K217 and T245. Residue 246–247 (NT) coordinates substrate. FMN-binding positions include G268, G297, and 318–319 (YS).

It belongs to the dihydroorotate dehydrogenase family. Type 2 subfamily. Monomer. It depends on FMN as a cofactor.

Its subcellular location is the cell membrane. The enzyme catalyses (S)-dihydroorotate + a quinone = orotate + a quinol. It functions in the pathway pyrimidine metabolism; UMP biosynthesis via de novo pathway; orotate from (S)-dihydroorotate (quinone route): step 1/1. Its function is as follows. Catalyzes the conversion of dihydroorotate to orotate with quinone as electron acceptor. The protein is Dihydroorotate dehydrogenase (quinone) of Shewanella putrefaciens (strain CN-32 / ATCC BAA-453).